The following is a 91-amino-acid chain: UPF0335 protein BRADO1188 (91 aa).

The protein belongs to the UPF0335 family.

This chain is UPF0335 protein BRADO1188, found in Bradyrhizobium sp. (strain ORS 278).